A 281-amino-acid chain; its full sequence is Aliphatic sulfonates import ATP-binding protein SsuB (281 aa).

The region spanning 40-263 (LDIRGLRKSF…QRGSAELAAL (224 aa)) is the ABC transporter domain. ATP is bound at residue 72-79 (GRSGCGKS).

This sequence belongs to the ABC transporter superfamily. Aliphatic sulfonates importer (TC 3.A.1.17.2) family. The complex is composed of two ATP-binding proteins (SsuB), two transmembrane proteins (SsuC) and a solute-binding protein (SsuA).

The protein localises to the cell inner membrane. It catalyses the reaction ATP + H2O + aliphatic sulfonate-[sulfonate-binding protein]Side 1 = ADP + phosphate + aliphatic sulfonateSide 2 + [sulfonate-binding protein]Side 1.. Its function is as follows. Part of the ABC transporter complex SsuABC involved in aliphatic sulfonates import. Responsible for energy coupling to the transport system. This Rhodopseudomonas palustris (strain ATCC BAA-98 / CGA009) protein is Aliphatic sulfonates import ATP-binding protein SsuB.